Here is a 173-residue protein sequence, read N- to C-terminus: Large ribosomal subunit protein uL10 (173 aa).

It belongs to the universal ribosomal protein uL10 family. Part of the ribosomal stalk of the 50S ribosomal subunit. The N-terminus interacts with L11 and the large rRNA to form the base of the stalk. The C-terminus forms an elongated spine to which L12 dimers bind in a sequential fashion forming a multimeric L10(L12)X complex.

Its function is as follows. Forms part of the ribosomal stalk, playing a central role in the interaction of the ribosome with GTP-bound translation factors. In Chloroherpeton thalassium (strain ATCC 35110 / GB-78), this protein is Large ribosomal subunit protein uL10.